Reading from the N-terminus, the 347-residue chain is ATPase GET3 (347 aa).

26 to 33 (KGGVGKTT) serves as a coordination point for ATP. The active site involves D57. Residues E240 and N267 each contribute to the ATP site. The Zn(2+) site is built by C279 and C282.

This sequence belongs to the arsA ATPase family. As to quaternary structure, homodimer. Component of the Golgi to ER traffic (GET) complex, which is composed of GET1, GET2 and GET3. Within the complex, GET1 and GET2 form a heterotetramer which is stabilized by phosphatidylinositol binding and which binds to the GET3 homodimer. Interacts with the chloride channel protein GEF1.

It is found in the cytoplasm. The protein resides in the endoplasmic reticulum. The protein localises to the golgi apparatus. Functionally, ATPase required for the post-translational delivery of tail-anchored (TA) proteins to the endoplasmic reticulum. Recognizes and selectively binds the transmembrane domain of TA proteins in the cytosol. This complex then targets to the endoplasmic reticulum by membrane-bound receptors GET1 and GET2, where the tail-anchored protein is released for insertion. This process is regulated by ATP binding and hydrolysis. ATP binding drives the homodimer towards the closed dimer state, facilitating recognition of newly synthesized TA membrane proteins. ATP hydrolysis is required for insertion. Subsequently, the homodimer reverts towards the open dimer state, lowering its affinity for the GET1-GET2 receptor, and returning it to the cytosol to initiate a new round of targeting. Cooperates with the HDEL receptor ERD2 to mediate the ATP-dependent retrieval of resident ER proteins that contain a C-terminal H-D-E-L retention signal from the Golgi to the ER. Involved in low-level resistance to the oxyanions arsenite and arsenate, and in heat tolerance. This is ATPase GET3 from Scheffersomyces stipitis (strain ATCC 58785 / CBS 6054 / NBRC 10063 / NRRL Y-11545) (Yeast).